The primary structure comprises 98 residues: Aspartyl/glutamyl-tRNA(Asn/Gln) amidotransferase subunit C (98 aa).

It belongs to the GatC family. As to quaternary structure, heterotrimer of A, B and C subunits.

It carries out the reaction L-glutamyl-tRNA(Gln) + L-glutamine + ATP + H2O = L-glutaminyl-tRNA(Gln) + L-glutamate + ADP + phosphate + H(+). It catalyses the reaction L-aspartyl-tRNA(Asn) + L-glutamine + ATP + H2O = L-asparaginyl-tRNA(Asn) + L-glutamate + ADP + phosphate + 2 H(+). Its function is as follows. Allows the formation of correctly charged Asn-tRNA(Asn) or Gln-tRNA(Gln) through the transamidation of misacylated Asp-tRNA(Asn) or Glu-tRNA(Gln) in organisms which lack either or both of asparaginyl-tRNA or glutaminyl-tRNA synthetases. The reaction takes place in the presence of glutamine and ATP through an activated phospho-Asp-tRNA(Asn) or phospho-Glu-tRNA(Gln). The protein is Aspartyl/glutamyl-tRNA(Asn/Gln) amidotransferase subunit C of Bifidobacterium adolescentis (strain ATCC 15703 / DSM 20083 / NCTC 11814 / E194a).